The following is a 20-amino-acid chain: L-amino-acid oxidase L2 (20 aa).

This sequence belongs to the flavin monoamine oxidase family. FIG1 subfamily. In terms of assembly, monomer. This is in contrast with most of its orthologs, that are non-covalently linked homodimers. The cofactor is FAD. N-glycosylated. As to expression, expressed by the venom gland.

The protein resides in the secreted. The enzyme catalyses an L-alpha-amino acid + O2 + H2O = a 2-oxocarboxylate + H2O2 + NH4(+). The catalysed reaction is L-leucine + O2 + H2O = 4-methyl-2-oxopentanoate + H2O2 + NH4(+). It catalyses the reaction L-phenylalanine + O2 + H2O = 3-phenylpyruvate + H2O2 + NH4(+). It carries out the reaction L-tryptophan + O2 + H2O = indole-3-pyruvate + H2O2 + NH4(+). The enzyme catalyses L-methionine + O2 + H2O = 4-methylsulfanyl-2-oxobutanoate + H2O2 + NH4(+). The catalysed reaction is L-isoleucine + O2 + H2O = (S)-3-methyl-2-oxopentanoate + H2O2 + NH4(+). It catalyses the reaction L-tyrosine + O2 + H2O = 3-(4-hydroxyphenyl)pyruvate + H2O2 + NH4(+). Its function is as follows. Catalyzes an oxidative deamination of predominantly hydrophobic and aromatic L-amino acids, thus producing hydrogen peroxide that may contribute to the diverse toxic effects of this enzyme. Is active on L-Ile, L-Leu, L-Met, L-Phe, L-Trp, and L-Tyr. Exhibits diverse biological activities, such as hemorrhage, hemolysis, edema, apoptosis of vascular endothelial cells or tumor cell lines, antibacterial and antiparasitic activities, as well as regulation of platelet aggregation. Its effect on platelets is controversial, since it either induces aggregation or inhibits agonist-induced aggregation. These different effects are probably due to different experimental conditions. This chain is L-amino-acid oxidase L2, found in Daboia russelii (Russel's viper).